We begin with the raw amino-acid sequence, 339 residues long: Cathepsin L (339 aa).

The N-terminal stretch at 1–17 (MRTVLVALLALVALTQA) is a signal peptide. Positions 18–121 (ISPLDLIKEE…ATYIPPAHVT (104 aa)) are cleaved as a propeptide — activation peptide. N-linked (GlcNAc...) asparagine glycosylation is present at N96. Disulfide bonds link C143-C186, C177-C219, and C278-C328. C146 is an active-site residue. The active site involves H285. Residues 295–298 (DESG) constitute a propeptide that is removed on maturation. Residue N306 is part of the active site.

Belongs to the peptidase C1 family. In terms of assembly, dimer of a heavy and a light chain linked by disulfide bonds.

It localises to the lysosome. It catalyses the reaction Specificity close to that of papain. As compared to cathepsin B, cathepsin L exhibits higher activity toward protein substrates, but has little activity on Z-Arg-Arg-NHMec, and no peptidyl-dipeptidase activity.. Important for the overall degradation of proteins in lysosomes. Required for differentiation of imaginal disks. The chain is Cathepsin L from Sarcophaga peregrina (Flesh fly).